A 371-amino-acid polypeptide reads, in one-letter code: Flagellar P-ring protein (371 aa).

Residues 1–24 (MSIRVLLFSIFTGFLLAAAGPALA) form the signal peptide. The segment covering 301–321 (PQPFSSGTTATQPQTDISAQK) has biased composition (polar residues). Residues 301–322 (PQPFSSGTTATQPQTDISAQKT) form a disordered region.

This sequence belongs to the FlgI family. The basal body constitutes a major portion of the flagellar organelle and consists of four rings (L,P,S, and M) mounted on a central rod.

It localises to the periplasm. The protein localises to the bacterial flagellum basal body. Assembles around the rod to form the L-ring and probably protects the motor/basal body from shearing forces during rotation. This chain is Flagellar P-ring protein, found in Allorhizobium ampelinum (strain ATCC BAA-846 / DSM 112012 / S4) (Agrobacterium vitis (strain S4)).